We begin with the raw amino-acid sequence, 300 residues long: Probable phytol kinase, chloroplastic (300 aa).

Residues 1-36 (MAAARPALPSSPTSLLLARSTSAPDLAARRPRRWLV) constitute a chloroplast transit peptide. Helical transmembrane passes span 60-78 (LLRD…YSLV), 98-118 (VVHV…SNST), 122-142 (FFAA…GLGF), 168-188 (YVIV…IGIV), 227-247 (FISG…LGYI), 254-274 (ALGK…IPVT), and 276-296 (VVDD…LLFG).

Belongs to the polyprenol kinase family.

It is found in the plastid. The protein resides in the chloroplast membrane. It carries out the reaction phytol + CTP = phytyl phosphate + CDP + H(+). It functions in the pathway cofactor biosynthesis; tocopherol biosynthesis. In terms of biological role, involved in the activation and reutilization of phytol from chlorophyll degradation in plant metabolism, including tocopherol biosynthesis. Catalyzes the conversion of phytol to phytol monophosphate (PMP). This is Probable phytol kinase, chloroplastic from Triticum aestivum (Wheat).